The sequence spans 369 residues: UDP-N-acetylglucosamine--N-acetylmuramyl-(pentapeptide) pyrophosphoryl-undecaprenol N-acetylglucosamine transferase (369 aa).

UDP-N-acetyl-alpha-D-glucosamine is bound by residues Thr16 to Gly18, Asn130, Arg171, Ser203, Ile253, and Gln298.

It belongs to the glycosyltransferase 28 family. MurG subfamily.

It is found in the cell inner membrane. It catalyses the reaction di-trans,octa-cis-undecaprenyl diphospho-N-acetyl-alpha-D-muramoyl-L-alanyl-D-glutamyl-meso-2,6-diaminopimeloyl-D-alanyl-D-alanine + UDP-N-acetyl-alpha-D-glucosamine = di-trans,octa-cis-undecaprenyl diphospho-[N-acetyl-alpha-D-glucosaminyl-(1-&gt;4)]-N-acetyl-alpha-D-muramoyl-L-alanyl-D-glutamyl-meso-2,6-diaminopimeloyl-D-alanyl-D-alanine + UDP + H(+). The protein operates within cell wall biogenesis; peptidoglycan biosynthesis. In terms of biological role, cell wall formation. Catalyzes the transfer of a GlcNAc subunit on undecaprenyl-pyrophosphoryl-MurNAc-pentapeptide (lipid intermediate I) to form undecaprenyl-pyrophosphoryl-MurNAc-(pentapeptide)GlcNAc (lipid intermediate II). This chain is UDP-N-acetylglucosamine--N-acetylmuramyl-(pentapeptide) pyrophosphoryl-undecaprenol N-acetylglucosamine transferase, found in Cytophaga hutchinsonii (strain ATCC 33406 / DSM 1761 / CIP 103989 / NBRC 15051 / NCIMB 9469 / D465).